The primary structure comprises 868 residues: Protein translocase subunit SecA (868 aa).

Residues Gln-87, 105 to 109, and Asp-500 contribute to the ATP site; that span reads GEGKT. Residues Cys-849, Cys-851, Cys-860, and His-861 each contribute to the Zn(2+) site.

This sequence belongs to the SecA family. As to quaternary structure, monomer and homodimer. Part of the essential Sec protein translocation apparatus which comprises SecA, SecYEG and auxiliary proteins SecDF-YajC and YidC. Zn(2+) is required as a cofactor.

The protein localises to the cell membrane. It is found in the cytoplasm. The catalysed reaction is ATP + H2O + cellular proteinSide 1 = ADP + phosphate + cellular proteinSide 2.. Its function is as follows. Part of the Sec protein translocase complex. Interacts with the SecYEG preprotein conducting channel. Has a central role in coupling the hydrolysis of ATP to the transfer of proteins into and across the cell membrane, serving both as a receptor for the preprotein-SecB complex and as an ATP-driven molecular motor driving the stepwise translocation of polypeptide chains across the membrane. The sequence is that of Protein translocase subunit SecA from Wolbachia pipientis wMel.